The sequence spans 861 residues: Leucine--tRNA ligase (861 aa).

Residues 42 to 52 (PYPSGRLHMGH) carry the 'HIGH' region motif. The short motif at 619-623 (KMSKS) is the 'KMSKS' region element. K622 is a binding site for ATP.

This sequence belongs to the class-I aminoacyl-tRNA synthetase family.

Its subcellular location is the cytoplasm. It catalyses the reaction tRNA(Leu) + L-leucine + ATP = L-leucyl-tRNA(Leu) + AMP + diphosphate. The protein is Leucine--tRNA ligase of Haemophilus influenzae (strain PittEE).